Consider the following 149-residue polypeptide: uncharacterized protein (149 aa).

This is an uncharacterized protein from Mycoplasma pneumoniae (strain ATCC 29342 / M129 / Subtype 1) (Mycoplasmoides pneumoniae).